The primary structure comprises 312 residues: Putative tricarboxylate transport protein, mitochondrial (312 aa).

3 Solcar repeats span residues 23-111 (EKTV…LKSQ), 122-208 (VMRL…LKDW), and 218-303 (ISKP…IIEF). 6 helical membrane-spanning segments follow: residues 29-49 (IVIGGITGGIEICITFPTEYV), 75-95 (VNGHGFFGLYRGLSVLLYGSI), 126-146 (LCGLGAGLSEAVFAVTPMETV), 164-184 (FVHGVGCIVKAEGLGGIYKGV), 221-241 (PIVGLMGAVAGAASVYGNTPI), and 286-306 (VCLDVGITFMIYDSIIEFLDV).

This sequence belongs to the mitochondrial carrier (TC 2.A.29) family.

Its subcellular location is the mitochondrion inner membrane. Functionally, transport of citrate across inner mitochondrial membrane. This Caenorhabditis elegans protein is Putative tricarboxylate transport protein, mitochondrial.